Consider the following 539-residue polypeptide: DnaJ homolog subfamily C member 7 homolog (539 aa).

6 TPR repeats span residues 3-36 (HEEC…SNGT), 75-108 (IKGY…DPRN), 189-222 (PEYL…DPDY), 235-268 (IESK…DPKL), 273-306 (SQLY…DPNY), and 307-340 (GKAY…DPEN). Residues 361–431 (DYYKILGVSK…KKKRQYDMGQ (71 aa)) enclose the J domain. The segment at 512–539 (MGGGFGGHSGHSHGGSRSRSSRGGNEYR) is disordered. Over residues 521-531 (GHSHGGSRSRS) the composition is skewed to basic residues.

In Dictyostelium discoideum (Social amoeba), this protein is DnaJ homolog subfamily C member 7 homolog (dnajc7).